A 101-amino-acid chain; its full sequence is MKPNFSKGLLPAVVIEEGTKEVLMLAYMNEEAYEKTLETKRTWFYSRSRRSLWNKGETSGNVQHVQSLYLDCDQDAIVVVVKQVGPACHTGEKTCFHYKII.

Position 71 (D71) interacts with Mg(2+). C72 provides a ligand contact to Zn(2+). Residues D73 and D75 each coordinate Mg(2+). C88 and C95 together coordinate Zn(2+).

It belongs to the PRA-CH family. As to quaternary structure, homodimer. It depends on Mg(2+) as a cofactor. The cofactor is Zn(2+).

It is found in the cytoplasm. The enzyme catalyses 1-(5-phospho-beta-D-ribosyl)-5'-AMP + H2O = 1-(5-phospho-beta-D-ribosyl)-5-[(5-phospho-beta-D-ribosylamino)methylideneamino]imidazole-4-carboxamide. It participates in amino-acid biosynthesis; L-histidine biosynthesis; L-histidine from 5-phospho-alpha-D-ribose 1-diphosphate: step 3/9. Functionally, catalyzes the hydrolysis of the adenine ring of phosphoribosyl-AMP. This chain is Phosphoribosyl-AMP cyclohydrolase, found in Bacillus cereus (strain Q1).